Here is a 298-residue protein sequence, read N- to C-terminus: Transcription factor bHLH114 (298 aa).

Residues 117-149 adopt a coiled-coil conformation; it reads LDHEIRNHKSSKEQITQDYKNLTSKRSEELEEN. The tract at residues 126-154 is disordered; the sequence is SSKEQITQDYKNLTSKRSEELEENSDEYS. The span at 129–140 shows a compositional bias: polar residues; the sequence is EQITQDYKNLTS. The region spanning 163-212 is the bHLH domain; the sequence is LETLSPLPSFKVRKEKLGDRITALQQLVSPFGKTDTASVLNEAVEYIKFL.

In terms of assembly, homodimer. As to expression, differentiating root endodermis.

It localises to the nucleus. This chain is Transcription factor bHLH114 (BHLH114), found in Arabidopsis thaliana (Mouse-ear cress).